We begin with the raw amino-acid sequence, 413 residues long: Endoplasmic reticulum resident protein 44.2 (413 aa).

Residues 1–21 form the signal peptide; sequence MNLASVLLLLAACHLSVSVNG. Residues 22–136 form the Thioredoxin domain; it reads QEHKEAIELS…LTNFVKFQLS (115 aa). A disulfide bridge links cysteine 184 with cysteine 233. Asparagine 264 is a glycosylation site (N-linked (GlcNAc...) asparagine). The interval 367-413 is disordered; it reads KAARGITDDHEAQAPSTRPIDTTPPPSVFKELKPSDKRYSILQKSEL. Positions 396–413 are enriched in basic and acidic residues; that stretch reads KELKPSDKRYSILQKSEL. A Prevents secretion from ER motif is present at residues 410 to 413; that stretch reads KSEL.

It localises to the endoplasmic reticulum lumen. The protein is Endoplasmic reticulum resident protein 44.2 of Caenorhabditis elegans.